The primary structure comprises 639 residues: Phosphatidylinositol 3,4,5-trisphosphate 3-phosphatase cnrN (639 aa).

The region spanning 20–190 is the Phosphatase tensin-type domain; the sequence is FKSKEMDLDL…NYFKEIVSGS (171 aa). The active-site Phosphocysteine intermediate is C129. The region spanning 195–350 is the C2 tensin-type domain; sequence EFVLTFRSIE…LQMECRFQNN (156 aa). Disordered stretches follow at residues 243–265, 395–429, 451–498, 519–567, and 598–628; these read INNDNSESNNNNNNNNNNNNNNN, NNILASSAPTPLTTTTTTTTTTTTTSLPSSEHSTP, SSSG…SCSS, NNNN…RKRK, and FTKKINPNNNEENVDQKTLPILKKETNDPSE. Composition is skewed to low complexity over residues 244 to 265, 395 to 424, 458 to 486, and 519 to 554; these read NNDNSESNNNNNNNNNNNNNNN, NNILASSAPTPLTTTTTTTTTTTTTSLPSS, NSSRNSNSNSRGGSSNSSSNRSSTSSRSS, and NNNNNNNNNNNNNNNNNNNNNKNSNNNNNESSSNSN. A compositionally biased stretch (polar residues) spans 598–608; it reads FTKKINPNNNE. Residues 619–628 show a composition bias toward basic and acidic residues; the sequence is LKKETNDPSE.

It depends on Mg(2+) as a cofactor.

It catalyses the reaction a 1,2-diacyl-sn-glycero-3-phospho-(1D-myo-inositol-3,4,5-trisphosphate) + H2O = a 1,2-diacyl-sn-glycero-3-phospho-(1D-myo-inositol-4,5-bisphosphate) + phosphate. In terms of biological role, protein phosphatase that negatively regulates PI3K-dependent pathways. Regulates cAMP signal transduction to control territory size. During development, a lawn of Dictyostelium cells breaks up into territories where cells aggregate in dendritic streams to form groups of 20'000 cells. The protein is Phosphatidylinositol 3,4,5-trisphosphate 3-phosphatase cnrN (cnrN) of Dictyostelium discoideum (Social amoeba).